A 361-amino-acid polypeptide reads, in one-letter code: BBSome complex member bbs-5 (361 aa).

The protein belongs to the BBS5 family. Part of BBSome complex, that contains at least bbs-1, bbs-2, bbs-4, bbs-5, osm-12, bbs-8/ttc-8 and bbs-9. Interacts with bbs-4 (via C-terminus); the interaction is direct.

The protein localises to the cell projection. The protein resides in the cilium membrane. It is found in the cytoplasm. It localises to the cytoskeleton. Its subcellular location is the cilium basal body. The protein localises to the microtubule organizing center. The protein resides in the centrosome. It is found in the centriolar satellite. Its function is as follows. Component of the BBSome complex. The BBSome complex is thought to function as a coat complex required for sorting of specific membrane proteins to the primary cilia. The BBSome complex is required for ciliogenesis but is dispensable for centriolar satellite function. Required for BBSome complex ciliary localization but not for the proper complex assembly. Required, redundantly with bbs-4, for cilia biogenesis and both the assembly and movement of intraflagellar transport proteins along the ciliary axoneme. Plays a role in the removal of degraded mechanosensory receptors within the cilia. This Caenorhabditis elegans protein is BBSome complex member bbs-5.